The primary structure comprises 322 residues: Deoxyhypusine hydroxylase (322 aa).

The Fe cation site is built by H78, E79, H111, and E112. HEAT-like PBS-type repeat units follow at residues 109 to 135, 203 to 229, 234 to 260, and 267 to 293; these read VRHEAAEALGALGDKDSLEDLEKCLKN, LRYRAMFRLRDIGTDEAVLALASGFND, FKHEIAYVFGQMGSTAAVPSLTEVLGR, and VRHEAAEALGAIASEDALPILKQYLND. The Fe cation site is built by H236, E237, H269, and E270.

The protein belongs to the deoxyhypusine hydroxylase family. Fe(2+) serves as cofactor.

Its subcellular location is the cytoplasm. It is found in the nucleus. The enzyme catalyses [eIF5A protein]-deoxyhypusine + AH2 + O2 = [eIF5A protein]-hypusine + A + H2O. Its pathway is protein modification; eIF5A hypusination. Catalyzes the hydroxylation of the N(6)-(4-aminobutyl)-L-lysine intermediate to form hypusine, an essential post-translational modification only found in mature eIF-5A factor. This Candida glabrata (strain ATCC 2001 / BCRC 20586 / JCM 3761 / NBRC 0622 / NRRL Y-65 / CBS 138) (Yeast) protein is Deoxyhypusine hydroxylase.